A 348-amino-acid polypeptide reads, in one-letter code: ECA polysaccharide chain length modulation protein (348 aa).

The Cytoplasmic portion of the chain corresponds to 1–30 (MTQPMPGKPAEDAENELDIRGLFRTLWAGK). Residues 31-51 (LWIIGMGLAFALIALAYTFFA) form a helical membrane-spanning segment. Topologically, residues 52 to 322 (RQEWSSTAIT…EPVKRDSPRR (271 aa)) are periplasmic. Residues 323–343 (AFLMIMWGIVGGLIGAGVALT) form a helical membrane-spanning segment. Topologically, residues 344-348 (RRCSK) are cytoplasmic.

This sequence belongs to the WzzB/Cld/Rol family. Homooctamer. Probably part of a complex composed of WzxE, WzyE and WzzE.

It is found in the cell inner membrane. The protein operates within bacterial outer membrane biogenesis; enterobacterial common antigen biosynthesis. Its function is as follows. Modulates the polysaccharide chain length of enterobacterial common antigen (ECA). This Escherichia coli O157:H7 protein is ECA polysaccharide chain length modulation protein.